Here is a 48-residue protein sequence, read N- to C-terminus: ATP synthase protein 8 (48 aa).

Residues 4–24 (LVPFYFINILSFGFLIFTVLL) form a helical membrane-spanning segment.

The protein belongs to the ATPase protein 8 family. F-type ATPases have 2 components, CF(1) - the catalytic core - and CF(0) - the membrane proton channel.

Its subcellular location is the mitochondrion membrane. In terms of biological role, mitochondrial membrane ATP synthase (F(1)F(0) ATP synthase or Complex V) produces ATP from ADP in the presence of a proton gradient across the membrane which is generated by electron transport complexes of the respiratory chain. F-type ATPases consist of two structural domains, F(1) - containing the extramembraneous catalytic core and F(0) - containing the membrane proton channel, linked together by a central stalk and a peripheral stalk. During catalysis, ATP synthesis in the catalytic domain of F(1) is coupled via a rotary mechanism of the central stalk subunits to proton translocation. Part of the complex F(0) domain. Minor subunit located with subunit a in the membrane. This chain is ATP synthase protein 8 (atp8), found in Schizosaccharomyces pombe (strain 972 / ATCC 24843) (Fission yeast).